The following is a 394-amino-acid chain: Aspergillopepsin-1 (394 aa).

The first 20 residues, 1–20 (MVVFSKTAALVLGLSSAVSA), serve as a signal peptide directing secretion. The propeptide at 21 to 69 (APAPTRKGFTINQIARPANKTRTINLPGMYARSLAKFGGTVPQSVKEAA) is activation peptide. The 307-residue stretch at 85-391 (YLTPVTVGKS…NSEGPKLGFA (307 aa)) folds into the Peptidase A1 domain. Active-site residues include D101 and D283. A disulfide bridge links C319 with C354.

It belongs to the peptidase A1 family. As to quaternary structure, monomer.

It is found in the secreted. It carries out the reaction Hydrolysis of proteins with broad specificity. Generally favors hydrophobic residues in P1 and P1', but also accepts Lys in P1, which leads to activation of trypsinogen. Does not clot milk.. Its function is as follows. Secreted aspartic endopeptidase that allows assimilation of proteinaceous substrates. The scissile peptide bond is attacked by a nucleophilic water molecule activated by two aspartic residues in the active site. Shows a broad primary substrate specificity. Favors hydrophobic residues at the P1 and P1' positions, but also accepts a lysine residue in the P1 position, leading to the activation of trypsinogen and chymotrypsinogen A. The protein is Aspergillopepsin-1 (pepA) of Aspergillus niger (strain ATCC MYA-4892 / CBS 513.88 / FGSC A1513).